The primary structure comprises 482 residues: Coagulation factor X (482 aa).

A signal peptide spans 1-20 (MESPVRLSLLYVVLASLLLP). Positions 21-40 (GRSVFINRERANNVLQRIRR) are excised as a propeptide. A Gla domain is found at 41–85 (ANSFFEEIKKGNLERECVEEICSFEEAREVFEDNEKTTEFWNKYE). A 4-carboxyglutamate mark is found at Glu46, Glu47, Glu54, Glu56, Glu59, Glu60, Glu65, Glu66, Glu69, Glu72, Glu75, and Glu79. Cys57 and Cys62 are oxidised to a cystine. An EGF-like 1; calcium-binding domain is found at 86 to 122 (DGDQCESSPCQNQGECRDGLGSYTCTCTEGFEGKNCE). Intrachain disulfides connect Cys90–Cys101, Cys95–Cys110, Cys112–Cys121, Cys129–Cys140, Cys136–Cys149, Cys151–Cys164, Cys172–Cys340, Cys238–Cys243, Cys259–Cys275, Cys388–Cys402, and Cys413–Cys441. Asp103 is subject to (3R)-3-hydroxyaspartate. In terms of domain architecture, EGF-like 2 spans 125–165 (VRKLCSLDNGDCDQFCREEQNSVVCSCAKGYFLGNDGKSCL). The propeptide at 184–231 (VALNTSNSEPDPEDLMPDADILYPTESPSELLNLNKTEPEANSDDVIR) is activation peptide. N-linked (GlcNAc...) asparagine glycosylation is found at Asn187 and Asn218. The Peptidase S1 domain maps to 232–465 (IVGGQECKRG…FLKWIDRSMK (234 aa)). Catalysis depends on charge relay system residues His274 and Asp320. Ser417 functions as the Charge relay system in the catalytic mechanism.

The protein belongs to the peptidase S1 family. As to quaternary structure, the two chains are formed from a single-chain precursor by the excision of two Arg residues and are held together by 1 or more disulfide bonds. Forms a heterodimer with SERPINA5. Interacts with ixolaris, an anticoagulant protein from Ixodes scapularis saliva. In terms of processing, the vitamin K-dependent, enzymatic carboxylation of some glutamate residues allows the modified protein to bind calcium. Post-translationally, N- and O-glycosylated. Proteolytically cleaved and activated by cathepsin CTSG. The activation peptide is cleaved by factor IXa (in the intrinsic pathway), or by factor VIIa (in the extrinsic pathway). In terms of processing, the iron and 2-oxoglutarate dependent 3-hydroxylation of aspartate and asparagine is (R) stereospecific within EGF domains. Plasma; synthesized in the liver.

The protein localises to the secreted. It carries out the reaction Selective cleavage of Arg-|-Thr and then Arg-|-Ile bonds in prothrombin to form thrombin.. Inhibited by SERPINA5. Functionally, factor Xa is a vitamin K-dependent glycoprotein that converts prothrombin to thrombin in the presence of factor Va, calcium and phospholipid during blood clotting. Factor Xa activates pro-inflammatory signaling pathways in a protease-activated receptor (PAR)-dependent manner. This chain is Coagulation factor X (F10), found in Rattus norvegicus (Rat).